The chain runs to 771 residues: DnaJ homolog subfamily C member 16 (771 aa).

Positions 1–25 (MELKRLSISWQFLIVLVLILQSLSA) are cleaved as a signal peptide. Residues 26 to 532 (LDFDPYRVLG…ESLLHSNWRE (507 aa)) lie on the Cytoplasmic side of the membrane. One can recognise a J domain in the interval 29-93 (DPYRVLGVSR…EKRTNYDHYG (65 aa)). Positions 116 to 244 (FYFDESFFHF…LRQFVESLLP (129 aa)) constitute a Thioredoxin domain. A helical; Anchor for type IV membrane protein transmembrane segment spans residues 533-553 (MMPLLSLIFSALFILFGTVIV). The Extracellular segment spans residues 554 to 771 (QAFSDSNEER…FYIPSWPELD (218 aa)). Residues 559–590 (SNEERESHPPDKEEVPEKAGKTEPSFTKESSS) are disordered. Positions 560–579 (NEERESHPPDKEEVPEKAGK) are enriched in basic and acidic residues. N-linked (GlcNAc...) asparagine glycosylation is present at Asn-628.

The protein resides in the endoplasmic reticulum membrane. Its function is as follows. Plays an important role in regulating the size of autophagosomes during the formation process. This Rattus norvegicus (Rat) protein is DnaJ homolog subfamily C member 16 (Dnajc16).